The chain runs to 195 residues: Imidazoleglycerol-phosphate dehydratase (195 aa).

This sequence belongs to the imidazoleglycerol-phosphate dehydratase family.

Its subcellular location is the cytoplasm. It carries out the reaction D-erythro-1-(imidazol-4-yl)glycerol 3-phosphate = 3-(imidazol-4-yl)-2-oxopropyl phosphate + H2O. It participates in amino-acid biosynthesis; L-histidine biosynthesis; L-histidine from 5-phospho-alpha-D-ribose 1-diphosphate: step 6/9. In Paraburkholderia phymatum (strain DSM 17167 / CIP 108236 / LMG 21445 / STM815) (Burkholderia phymatum), this protein is Imidazoleglycerol-phosphate dehydratase.